The sequence spans 307 residues: Protoheme IX farnesyltransferase (307 aa).

The next 9 membrane-spanning stretches (helical) occupy residues 31 to 51 (VMSLVIFTCFVGMLLAPYSVH), 52 to 72 (PFIASIAVVCIAFGAGSAGAI), 102 to 119 (ALSFGLITGFFAVFFMAL), 123 to 145 (LLASFLLLFTIFYYICIYTIWLK), 151 to 171 (NIVIGGVSGALPPVIGYAAVS), 179 to 199 (VILFLIILIWTPPHSWALALF), 225 to 245 (ILIYSFLLFIVSLMPFFIGMS), 247 to 267 (FIYLIISGILGLVFLYYAGSL), and 281 to 301 (FVYSIFYLFFIFLLLYLTNTI).

It belongs to the UbiA prenyltransferase family. Protoheme IX farnesyltransferase subfamily.

The protein localises to the cell inner membrane. It carries out the reaction heme b + (2E,6E)-farnesyl diphosphate + H2O = Fe(II)-heme o + diphosphate. The protein operates within porphyrin-containing compound metabolism; heme O biosynthesis; heme O from protoheme: step 1/1. Its function is as follows. Converts heme B (protoheme IX) to heme O by substitution of the vinyl group on carbon 2 of heme B porphyrin ring with a hydroxyethyl farnesyl side group. In Rickettsia canadensis (strain McKiel), this protein is Protoheme IX farnesyltransferase.